Here is a 2103-residue protein sequence, read N- to C-terminus: uncharacterized protein (2103 aa).

The segment covering 1–12 (MSVPGTPGAMEP) has biased composition (low complexity). The segment at 1-61 (MSVPGTPGAM…DADDQEEEME (61 aa)) is disordered. Acidic residues predominate over residues 51-61 (EDADDQEEEME). In terms of domain architecture, Bromo spans 77–196 (YELQQGYRIL…MMLEQKLALL (120 aa)). 5 disordered regions span residues 730-750 (AKHK…ITKK), 853-881 (NREL…SIDS), 933-956 (QSKQ…AKLS), 1224-1244 (SASP…TLNG), and 1770-1817 (GATR…STSP). A compositionally biased stretch (basic and acidic residues) spans 865 to 877 (DLGKDSPKGEISK). Residues 1224 to 1234 (SASPTISSTGQ) show a composition bias toward polar residues. The segment covering 1235–1244 (PLSSTTTLNG) has biased composition (low complexity). Residues 1773–1794 (RSVSISKRQSRTSLQFHSPGIS) are compositionally biased toward polar residues. Over residues 1795-1808 (TTVPTNVNTNKPQT) the composition is skewed to low complexity.

It is found in the nucleus. This is an uncharacterized protein from Homo sapiens (Human).